The sequence spans 551 residues: Eukaryotic translation initiation factor 3 subunit D-2 (551 aa).

A disordered region spans residues 105-152 (NNVRARGRTGRGSQAVGGPGGPAAGGSTANSTKYGKGRNTRNTQNVGR). Positions 119 to 128 (AVGGPGGPAA) are enriched in gly residues. The interval 290–304 (QFDLLTVNETSLEPP) is RNA gate.

It belongs to the eIF-3 subunit D family. Component of the eukaryotic translation initiation factor 3 (eIF-3) complex. The eIF-3 complex interacts with pix.

It is found in the cytoplasm. Functionally, mRNA cap-binding component of the eukaryotic translation initiation factor 3 (eIF-3) complex, which is involved in protein synthesis of a specialized repertoire of mRNAs and, together with other initiation factors, stimulates binding of mRNA and methionyl-tRNAi to the 40S ribosome. The eIF-3 complex specifically targets and initiates translation of a subset of mRNAs involved in cell proliferation. In the eIF-3 complex, eif3d specifically recognizes and binds the 7-methylguanosine cap of a subset of mRNAs. The polypeptide is Eukaryotic translation initiation factor 3 subunit D-2 (Drosophila erecta (Fruit fly)).